Here is a 210-residue protein sequence, read N- to C-terminus: Protein LURP-one-related 5 (210 aa).

It belongs to the LOR family.

In terms of biological role, might be related to the phospholipid scramblase and tubby-like superfamily of membrane tethered transcription factors. The polypeptide is Protein LURP-one-related 5 (Arabidopsis thaliana (Mouse-ear cress)).